The primary structure comprises 59 residues: Large ribosomal subunit protein bL32 (59 aa).

Residues 1–16 (MAVPKRKTSPSRRGMR) are compositionally biased toward basic residues. The disordered stretch occupies residues 1 to 20 (MAVPKRKTSPSRRGMRRSHD).

Belongs to the bacterial ribosomal protein bL32 family.

The polypeptide is Large ribosomal subunit protein bL32 (Novosphingobium aromaticivorans (strain ATCC 700278 / DSM 12444 / CCUG 56034 / CIP 105152 / NBRC 16084 / F199)).